A 164-amino-acid polypeptide reads, in one-letter code: MLKINYFNDTDVNMNSWKKFANKILKIAYNYFNFNYDIELSITFVDDLKAQQINQQYRNHSYIADVTSFPVEMTENEIKAIGFRELGDMFINLSEAKRKAIKYNHDLNSEMGFLFVHGFLHLLGYDHENLDDEKIMFDLQDQILKLNNLVYIIKFNEEDYLESN.

His-117, His-121, and His-127 together coordinate Zn(2+).

It belongs to the endoribonuclease YbeY family. It depends on Zn(2+) as a cofactor.

Its subcellular location is the cytoplasm. In terms of biological role, single strand-specific metallo-endoribonuclease involved in late-stage 70S ribosome quality control and in maturation of the 3' terminus of the 16S rRNA. This Mycoplasma capricolum subsp. capricolum (strain California kid / ATCC 27343 / NCTC 10154) protein is Endoribonuclease YbeY.